Here is a 143-residue protein sequence, read N- to C-terminus: Regulator of ribonuclease activity B (143 aa).

Residues 117-135 (DPDAEYDDEDGENEDDESE) are compositionally biased toward acidic residues. The interval 117–143 (DPDAEYDDEDGENEDDESESDKSSRLH) is disordered.

This sequence belongs to the RraB family. As to quaternary structure, interacts with the C-terminal region of Rne.

It localises to the cytoplasm. Globally modulates RNA abundance by binding to RNase E (Rne) and regulating its endonucleolytic activity. Can modulate Rne action in a substrate-dependent manner by altering the composition of the degradosome. In Proteus mirabilis (strain HI4320), this protein is Regulator of ribonuclease activity B.